The following is a 1006-amino-acid chain: MDLDSSMVPENDQDPIATSENQSPMEEKEEASEQQTGSESESASLTPSLPPPSQQQQQQQQQPQVTAVVGPRCAPTYSVVNAIIEKKEDGPGPRCGHTLTAVPAVGEEGTSSYIGPRLILFGGATALEGNSGGTGTPTSAGSAGIRLAGATADVHCYDVLSNKWSRLTPYGEPPSPRAAHVATAVGTMVVIQGGIGPAGLSAEDLHVLDLTQQRPRWHRVVVQGPGPGPRYGHVMALVGQRYLMAIGGNDGKRPLADVWALDTAAKPYEWRKLEPEGEGPPPCMYATASARSDGLLLLCGGRDANSVPLASAYGLAKHRDGRWEWAIAPGVSPSARYQHAAVFVNARLHVSGGALGGGRMVEDSSSVAVLDTAAGVWCDTKSVVTSPRTGRYSADAAGGDASVELTRRCRHAAAAVGDLIFIYGGLRGGVLLDDLLVAEDLAAAETTSAASHAAAAAAATNTPPGRSPGRYGFSDERTGELPESAPDAVVLGSPVAPPVNGDMYTDISTENAMVPGIRRTSKGVEYLVEASAAEAEAISATLAAAKARQVNGEVELPDRDRGAEATPSGKPSLSLIKPDSAVPNSVIPAGVRLHHRAVVVAAETGGALGGMVRQLSIDQFENEGRRVSYGTPESATAARKLLDRQMSINSVPKKVVAHLLKPRGWKPPVRRQFFLDCNEIADLCDSAERIFSSEPTVLQLKAPIKIFGDLHGQFGDLMRLFDEYGSPSTAGDISYIDYLFLGDYVDRGQHSLETITLLLALKVEYQHNVHLIRGNHEAADINALFGFRIECIERMGERDGIWVWHRINRLFNWLPLAALIEKKIICMHGGIGRSINHVEQIENIQRPITMEAGSIVLMDLLWSDPTENDSVEGLRPNARGPGLVTFGPDRVMEFCNNNDLQLIVRAHECVMDGFERFAQGHLITLFSATNYCGTANNAGAILVLGRDLVVVPKLIHPLPPAITSPETSPERHIEDTWMQELNVNRPPTPTRGRPQNPNDRGSLAWI.

The tract at residues 1 to 67 (MDLDSSMVPE…QQQQQPQVTA (67 aa)) is disordered. Low complexity-rich tracts occupy residues 38–47 (SESESASLTP) and 54–67 (QQQQQQQQQPQVTA). Kelch repeat units lie at residues 138–184 (TSAG…VATA), 242–290 (YLMA…TASA), 295–345 (LLLL…VFVN), 351–398 (SGGA…DAAG), and 419–465 (LIFI…TPPG). 2 disordered regions span residues 454–494 (AAAA…LGSP) and 552–579 (GEVELPDRDRGAEATPSGKPSLSLIKPD). Residue Ser-616 is modified to Phosphoserine. Asp-709, His-711, Asp-743, and Asn-775 together coordinate Mn(2+). The active-site Proton donor is the His-776. Residues His-828 and His-907 each coordinate Mn(2+). The residue at position 964 (Ser-964) is a Phosphoserine. The segment at 982 to 1006 (NVNRPPTPTRGRPQNPNDRGSLAWI) is disordered.

Belongs to the PPP phosphatase family. BSU subfamily. Requires Mn(2+) as cofactor. In terms of tissue distribution, expressed throughout the plant, with a higher level in younger parts.

It localises to the nucleus. The catalysed reaction is O-phospho-L-seryl-[protein] + H2O = L-seryl-[protein] + phosphate. The enzyme catalyses O-phospho-L-threonyl-[protein] + H2O = L-threonyl-[protein] + phosphate. Its function is as follows. Phosphatase involved in elongation process, probably by acting as a regulator of brassinolide signaling. This Arabidopsis thaliana (Mouse-ear cress) protein is Serine/threonine-protein phosphatase BSL3 (BSL3).